We begin with the raw amino-acid sequence, 419 residues long: Caspase-12 (419 aa).

Positions 1–92 (MAARRTHERD…QLSLQFSNDE (92 aa)) constitute a CARD domain. Serine 85 bears the Phosphoserine mark. The segment at 88 to 113 (FSNDEDDGPQKICTPSSPSESKRKVE) is disordered. Active-site residues include histidine 250 and cysteine 298.

It belongs to the peptidase C14A family. Heterotetramer that consists of two anti-parallel arranged heterodimers, each one formed by two subunits (Potential). Interacts with TRAF2 under resting conditions; this interaction is reduced in ER stress conditions. Mainly expressed in skeletal muscle and lung.

Its function is as follows. Involved in the activation cascade of caspases responsible for apoptosis execution. In Mus musculus (Mouse), this protein is Caspase-12 (Casp12).